The chain runs to 604 residues: Lipoma-preferred partner homolog (604 aa).

Disordered regions lie at residues 31–96 (TPSI…LDDV) and 129–381 (DLES…AFRP). Residues 32 to 41 (PSISVSTQQT) show a composition bias toward polar residues. Low complexity-rich tracts occupy residues 42-53 (PKKFAPVVAPKP) and 143-161 (GSGT…TPVT). The segment covering 207 to 226 (SYTTASTPSRPTFNVQVRTA) has biased composition (polar residues). A compositionally biased stretch (low complexity) spans 365 to 377 (SGYPSSGPTSSTP). 3 LIM zinc-binding domains span residues 406–465 (GRCA…INTL), 466–526 (EQCS…KFAP), and 527–595 (RCSV…RIQA).

Belongs to the zyxin/ajuba family.

Its subcellular location is the nucleus. The protein localises to the cytoplasm. The protein resides in the cell junction. In terms of biological role, may play a structural role at sites of cell adhesion in maintaining cell shape and motility. May be involved in signal transduction from cell adhesion sites to the nucleus. In Gallus gallus (Chicken), this protein is Lipoma-preferred partner homolog (LPP).